The sequence spans 144 residues: Large-conductance mechanosensitive channel (144 aa).

A run of 2 helical transmembrane segments spans residues Val16–Val36 and Gly86–Val106.

Belongs to the MscL family. In terms of assembly, homopentamer.

The protein localises to the cell inner membrane. Its function is as follows. Channel that opens in response to stretch forces in the membrane lipid bilayer. May participate in the regulation of osmotic pressure changes within the cell. This chain is Large-conductance mechanosensitive channel, found in Cupriavidus metallidurans (strain ATCC 43123 / DSM 2839 / NBRC 102507 / CH34) (Ralstonia metallidurans).